A 1056-amino-acid polypeptide reads, in one-letter code: RNA cytidine acetyltransferase (1056 aa).

An ATP-binding site is contributed by 286–295 (GRGKSAALGI). The span at 433–446 (QNNTSGRESTQTAV) shows a compositional bias: polar residues. Positions 433–463 (QNNTSGRESTQTAVVSRDNKEKDSHLHSQSR) are disordered. The span at 449–463 (RDNKEKDSHLHSQSR) shows a compositional bias: basic and acidic residues. Arg475 provides a ligand contact to ATP. The region spanning 566 to 706 (VLLPPIDPKD…VKLRDAKTLP (141 aa)) is the N-acetyltransferase domain. Acetyl-CoA is bound by residues 638 to 640 (IAT), 645 to 651 (ASMGYGS), and Asn739. A phosphoserine mark is found at Ser1001, Ser1007, and Ser1010.

It belongs to the RNA cytidine acetyltransferase family. NAT10 subfamily. In terms of assembly, interacts with TAN1. Associates with 90S pre-ribosomal particles.

The protein resides in the nucleus. The protein localises to the nucleolus. It carries out the reaction a cytidine in 18S rRNA + acetyl-CoA + ATP + H2O = an N(4)-acetylcytidine in 18S rRNA + ADP + phosphate + CoA + H(+). The enzyme catalyses a cytidine in tRNA + acetyl-CoA + ATP + H2O = an N(4)-acetylcytidine in tRNA + ADP + phosphate + CoA + H(+). Its function is as follows. RNA cytidine acetyltransferase with specificity toward both 18S rRNA and tRNAs. Catalyzes the formation of N(4)-acetylcytidine (ac4C) at positions 1280 and 1773 in 18S rRNA. Required for early nucleolar cleavages of precursor rRNA at sites A0, A1 and A2 during 18S rRNA synthesis. Catalyzes the formation of ac4C at position 12 in serine and leucine tRNAs. Requires the tRNA-binding adapter protein TAN1 for full tRNA acetyltransferase activity but not for 18S rRNA acetylation. The polypeptide is RNA cytidine acetyltransferase (Saccharomyces cerevisiae (strain ATCC 204508 / S288c) (Baker's yeast)).